The primary structure comprises 213 residues: Large ribosomal subunit protein uL1 (213 aa).

The protein belongs to the universal ribosomal protein uL1 family. As to quaternary structure, part of the 50S ribosomal subunit.

Functionally, binds directly to 23S rRNA. Probably involved in E site tRNA release. Protein L1 is also a translational repressor protein, it controls the translation of its operon by binding to its mRNA. This chain is Large ribosomal subunit protein uL1, found in Methanococcus maripaludis (strain DSM 14266 / JCM 13030 / NBRC 101832 / S2 / LL).